Reading from the N-terminus, the 195-residue chain is Calcium channel flower (195 aa).

3 helical membrane-spanning segments follow: residues 34 to 54, 66 to 88, and 117 to 137; these read LLGI…VISI, IIQM…VCIE, and IFMC…ATGV.

Belongs to the calcium channel flower family. Homomultimer. Associates with the dally/ magu complex.

The protein localises to the cell membrane. It localises to the cytoplasmic vesicle. It is found in the secretory vesicle. Its subcellular location is the synaptic vesicle membrane. The protein resides in the presynaptic cell membrane. The protein localises to the endosome. Channel activity is inhibited by La(3+), which reduces Ca(2+) influx and thus inhibits it's function in promoting activity-dependent bulk endocytosis (ADBE) in response to high stimuli. Its function is as follows. Transmembrane protein which mediates synaptic endocytosis, fitness-based cell culling, neuronal culling, morphogen gradient scaling, and calcium transport. Regulates synaptic endocytosis and hence couples exo- with endocytosis. Controls two major modes of synaptic vesicle (SV) endocytosis in the synaptic boutons of neuromuscular junctions (NMJs); Ca(2+) channel-independent Clathrin-mediated endocytosis (CME) in response to mild stimulation, and Ca(2+) channel-dependent activity-dependent bulk endocytosis (ADBE) in response to strong stimulation. Functions in ADBE and subsequent SV reformation from bulk endosomes by initiating Ca(2+) channel-dependent phosphatidylinositol 4,5-bisphosphate (PtdIns(4,5)P2) compartmentalization in synaptic boutons. There it acts at the periactive zone to provide the low Ca(2+) levels required to initiate Calcineurin activation and upregulate PtdIns(4,5)P2. Conversely PtdIns(4,5)P2 enhances fwe Ca(2+) channel-activity, establishing a positive feedback loop that induces PtdIns(4,5)P2 microdomain at the periactive zone. These microdomains trigger bulk membrane invagination (i.e. ADBE) by triggering actin polymerization while also promoting localization of fwe to bulk endosomes, thereby removing the ADBE trigger to reduce endocytosis and prevent excess membrane uptake. PtdIns(4,5)P2 then promotes SV reformation from the bulk endosomes, to coordinate ADBE and subsequent SV reformation. Different combinations of the flower isoforms at the cell membrane are also required for the identification and elimination of suboptimal or supernumerary cells during development, regeneration, and adulthood. Required for the recognition and elimination of unfit cells in the developing wing during cell competition. In the developing pupal retina, mediates the elimination of unwanted postmitotic neurons, including supernumerary photoreceptor neurons that form at the periphery of the retina and are contained within incomplete ommatidia units. Also required for efficient elimination and replacement of old neurons by newly generated neurons during regeneration in the adult brain following mechanical injury. Downstream of the flower fitness fingerprints, cells identified as unwanted or unfit are eliminated via apoptosis through the expression of ahuizotl (azot). However, the cells marked for elimination by the flower isoforms only undergo apoptosis if additional thresholds are met; (1) their neighboring fit/healthy cells express different levels of the fwe isoforms, and (2) the levels of the protective signal SPARC expressed by the loser or unwanted cells are unable to inhibit caspase activation. These additional thresholds for flower-mediated apoptosis, allows useful cells to recover from transient and limited stress before they are unnecessarily eliminated. Functions with dally and magu in a mechanism of scaling, which utilises apoptosis to ensure that the dpp morphogen gradient, which mediates organ growth, remains proportional to the size of the growing wing. In this mechanism, fwe represses dally- and Magu-dependent activity in expanding the gradient, and dally/Magu inhibits fwe-dependent apoptosis to keep cell death rate low. When the levels of these different proteins are optimally regulated the gradient correctly scales with organ growth but when this fails, fwe-mediated apoptosis is activated to trim the developing tissue to match the correct size of the gradient. This is Calcium channel flower from Drosophila ananassae (Fruit fly).